The sequence spans 266 residues: Glucosamine-6-phosphate deaminase (266 aa).

The active-site Proton acceptor; for enolization step is the Asp-72. Asp-141 functions as the For ring-opening step in the catalytic mechanism. The active-site Proton acceptor; for ring-opening step is the His-143. Residue Glu-148 is the For ring-opening step of the active site.

The protein belongs to the glucosamine/galactosamine-6-phosphate isomerase family. NagB subfamily. As to quaternary structure, homohexamer.

It catalyses the reaction alpha-D-glucosamine 6-phosphate + H2O = beta-D-fructose 6-phosphate + NH4(+). Its pathway is amino-sugar metabolism; N-acetylneuraminate degradation; D-fructose 6-phosphate from N-acetylneuraminate: step 5/5. With respect to regulation, allosterically activated by N-acetylglucosamine 6-phosphate (GlcNAc6P). Its function is as follows. Catalyzes the reversible isomerization-deamination of glucosamine 6-phosphate (GlcN6P) to form fructose 6-phosphate (Fru6P) and ammonium ion. The sequence is that of Glucosamine-6-phosphate deaminase from Aeromonas hydrophila subsp. hydrophila (strain ATCC 7966 / DSM 30187 / BCRC 13018 / CCUG 14551 / JCM 1027 / KCTC 2358 / NCIMB 9240 / NCTC 8049).